The primary structure comprises 114 residues: TYRO protein tyrosine kinase-binding protein (114 aa).

Positions 1–21 are cleaved as a signal peptide; that stretch reads MGALEPSWCLLFLPVLLTVGG. Topologically, residues 22–42 are extracellular; the sequence is LSPVQAQSDTFPRCDCSSVSP. The chain crosses the membrane as a helical span at residues 43-63; the sequence is GVLAGIVLGDLVLTLLIALAV. Aspartate 52 is a binding site for Ca(2+). At 64-114 the chain is on the cytoplasmic side; that stretch reads YSLGRLVSRGQGTAEGTRKQHIAETESPYQELQGQRPEVYSDLNTQRQYYR. Positions 74-107 are disordered; the sequence is QGTAEGTRKQHIAETESPYQELQGQRPEVYSDLN. One can recognise an ITAM domain in the interval 81-109; the sequence is RKQHIAETESPYQELQGQRPEVYSDLNTQ. Tyrosine 92 and tyrosine 103 each carry phosphotyrosine.

It belongs to the TYROBP family. In terms of assembly, homodimer; disulfide-linked. Homotrimer; disulfide-linked. Homotetramer; disulfide-linked. Homotrimers and homotetramers form when low levels of partner receptors are available and are competitive with assembly with interacting receptors. They may represent alternative oligomerization states or may be intermediates in the receptor assembly process. Binding of a metal cation aids in homooligomerization through coordination of the metal ion by the subunits of the oligomer. Interacts with TREM1. Interacts with TREM2. Interacts with TREM3. Interacts with CLECSF5. Interacts with CD300LB and CD300C2. Interacts with CD300E. Interacts (via ITAM domain) with SYK (via SH2 domains); activates SYK mediating neutrophil and macrophage integrin-mediated activation. Interacts (via transmembrane domain) with KLRK1 isoform 2 (via transmembrane domain); the interaction is required for KLRK1 NK cell surface expression and NK cell-mediated cytotoxicity. Interacts with KLRC2. Interacts with CD300H. Interacts with KLRD1. Interacts with KLRA4 and KLRA8. Post-translationally, tyrosine phosphorylated. Following ligand binding by associated receptors, tyrosine phosphorylated in the ITAM domain which leads to activation of additional tyrosine kinases and subsequent cell activation. As to expression, expressed on microglia (at protein level). Expressed on oligodendrocytes (at protein level). Expressed on macrophages and osteoclasts. Expressed on dendritic cells in liver, spleen, kidney and lung with highest levels in liver dendritic cells.

Its subcellular location is the cell membrane. Adapter protein which non-covalently associates with activating receptors found on the surface of a variety of immune cells to mediate signaling and cell activation following ligand binding by the receptors. TYROBP is tyrosine-phosphorylated in the ITAM domain following ligand binding by the associated receptors which leads to activation of additional tyrosine kinases and subsequent cell activation. Also has an inhibitory role in some cells. Non-covalently associates with activating receptors of the CD300 family to mediate cell activation. Also mediates cell activation through association with activating receptors of the CD200R family. Required for neutrophil activation mediated by integrin. Required for the activation of myeloid cells mediated by the CLEC5A/MDL1 receptor. Associates with natural killer (NK) cell receptors such as the KLRD1/KLRC2 heterodimer to mediate NK cell activation. Also associates non-covalently with the NK cell receptors KLRA4/LY49D and KLRA8/LY49H which leads to NK cell activation. Associates with TREM1 to mediate activation of neutrophils and monocytes. Associates with TREM2 on monocyte-derived dendritic cells to mediate up-regulation of chemokine receptor CCR7 and dendritic cell maturation and survival. Association with TREM2 mediates cytokine-induced formation of multinucleated giant cells which are formed by the fusion of macrophages. Stabilizes the TREM2 C-terminal fragment (TREM2-CTF) which is produced by TREM2 ectodomain shedding. In microglia, required with TREM2 for phagocytosis of apoptotic neurons. Required with ITGAM/CD11B in microglia to control production of microglial superoxide ions which promote the neuronal apoptosis that occurs during brain development. Promotes pro-inflammatory responses in microglia following nerve injury which accelerates degeneration of injured neurons. Positively regulates the expression of the IRAK3/IRAK-M kinase and IL10 production by liver dendritic cells and inhibits their T cell allostimulatory ability. Negatively regulates B cell proliferation. Required for CSF1-mediated osteoclast cytoskeletal organization. Positively regulates multinucleation during osteoclast development. The sequence is that of TYRO protein tyrosine kinase-binding protein from Mus musculus (Mouse).